Reading from the N-terminus, the 408-residue chain is MPVNYATPAADQLFPVAGVRLGVAEAEIRKKNRRDLTLVALDAGCTVAGVFTQNRFCAAPVQLCRNHLAGGHEIRALVINTGIANAGTGEPGRQTAQASCDAVAELLGIKAEQVLPFSTGVILEPLPVERLKAGLPAAKADLKADNWHAAAHAIMTTDTVAKAASRVVTVNGKKISISGVSKGAGMIKPNMATMLGFLATDASIAQGMLDKLVKEAADASFNCITVDGDTSTNDSFVMIASGQSGASFATETDAGWAEVKAAIIAVSVELAQAIVRDGEGATKFITVAVEGGKDSEECRKVGYAIGHSPLVKTAFFASDPNLGRILAAVGYAGINDLDVDGVRVWLDEVLVAEKGGRAAAYKEEDGARVMAQAEITVRVDLGRGAAKASVYTCDFSYDYVKINADYRS.

Substrate contacts are provided by Thr156, Lys182, Thr193, Glu279, Asn403, and Ser408. Thr193 acts as the Nucleophile in catalysis.

It belongs to the ArgJ family. Heterotetramer of two alpha and two beta chains.

The protein resides in the cytoplasm. The catalysed reaction is N(2)-acetyl-L-ornithine + L-glutamate = N-acetyl-L-glutamate + L-ornithine. It catalyses the reaction L-glutamate + acetyl-CoA = N-acetyl-L-glutamate + CoA + H(+). Its pathway is amino-acid biosynthesis; L-arginine biosynthesis; L-ornithine and N-acetyl-L-glutamate from L-glutamate and N(2)-acetyl-L-ornithine (cyclic): step 1/1. It functions in the pathway amino-acid biosynthesis; L-arginine biosynthesis; N(2)-acetyl-L-ornithine from L-glutamate: step 1/4. Catalyzes two activities which are involved in the cyclic version of arginine biosynthesis: the synthesis of N-acetylglutamate from glutamate and acetyl-CoA as the acetyl donor, and of ornithine by transacetylation between N(2)-acetylornithine and glutamate. The polypeptide is Arginine biosynthesis bifunctional protein ArgJ (Dechloromonas aromatica (strain RCB)).